A 391-amino-acid chain; its full sequence is MSLSKETEVIFDEHRGVDYDSANPPLYDSSTFHQKVLGGNAKFDYARSGNPNRQLLEEKLAKLEGGQYAFAYASGIAAISAVLLTLKANDHVILPDDVYGGTFRLTEQILNRFDIQFTTVNATQPKEIERAIQPNTKLIYVETPSNPCFKITDIRAVAAIAKRHHLLLAVDNTFMTPLGQSPLALGADIVVHSATKFLGGHSDIIAGAAITNRKDVADALYLLQNGTGTALSAHDSWTLAKHLKTLPVRFKQSTSNAEKLVAFLKEREEIAEVYYPGNSSLHLSQANSGGAVIGFRLKDETKTQDFVDALTLPLVSVSLGGVETILSHPATMSHAAVPEDVRNERGITFGLFRLSVGLEQPQELIADLNYALKEAFNESIIESITEQRFSS.

Lysine 196 bears the N6-(pyridoxal phosphate)lysine mark.

It belongs to the trans-sulfuration enzymes family. As to quaternary structure, homotetramer. The cofactor is pyridoxal 5'-phosphate.

The catalysed reaction is L,L-cystathionine + H2O = L-homocysteine + pyruvate + NH4(+). The enzyme catalyses an S-substituted L-cysteine + H2O = a thiol + pyruvate + NH4(+). It participates in amino-acid biosynthesis; L-methionine biosynthesis via de novo pathway; L-homocysteine from L-cystathionine: step 1/1. Its activity is regulated as follows. Cystathionine beta-lyase activity is inhibited by sweat components such as glycine, serine and ammonium sulfate. Inhibited by cystathionine at a concentration higher than 6 mM. Its function is as follows. Catalyzes the transformation of cystathionine into homocysteine. Can also catalyze, at low levels, the conversion of cystathionine into methionine and the conversion of methionine into methanethiol. This is Cystathionine beta-lyase MetC from Staphylococcus haemolyticus (strain JCSC1435).